Consider the following 467-residue polypeptide: Fumarate hydratase class II (467 aa).

Substrate contacts are provided by residues Ser-98–Thr-100, Arg-126, His-129–Asp-132, Ser-139–Asn-141, and Thr-187. His-188 serves as the catalytic Proton donor/acceptor. Residue Ser-318 is part of the active site. Substrate-binding positions include Ser-319 and Lys-324–Asn-326.

The protein belongs to the class-II fumarase/aspartase family. Fumarase subfamily. Homotetramer.

The protein localises to the cytoplasm. It catalyses the reaction (S)-malate = fumarate + H2O. It participates in carbohydrate metabolism; tricarboxylic acid cycle; (S)-malate from fumarate: step 1/1. Its function is as follows. Involved in the TCA cycle. Catalyzes the stereospecific interconversion of fumarate to L-malate. The protein is Fumarate hydratase class II of Shigella flexneri.